The primary structure comprises 184 residues: MRRGPRSLRGRDAPAPTPCVPAECFDLLVRHCVACGLLRTPRPKPAGASSPAPRTALQPQESVGAGAGEAALPLPGLLFGAPALLGLALVLALVLVGLVSWRRRQRRLRGASSAEAPDGDKDAPEPLDKVIILSPGISDATAPAWPPPGEDPGTTPPGHSVPVPATELGSTELVTTKTAGPEQQ.

Over 1-78 (MRRGPRSLRG…EAALPLPGLL (78 aa)) the chain is Extracellular. A TNFR-Cys; truncated repeat occupies 18 to 35 (PCVPAECFDLLVRHCVAC). 2 disulfides stabilise this stretch: Cys-19-Cys-32 and Cys-24-Cys-35. Positions 26–31 (DLLVRH) are essential for TNFSF13B/TALL1/BAFF/BLyS binding. The tract at residues 43–62 (PKPAGASSPAPRTALQPQES) is disordered. The chain crosses the membrane as a helical; Signal-anchor for type III membrane protein span at residues 79–99 (FGAPALLGLALVLALVLVGLV). The Cytoplasmic segment spans residues 100–184 (SWRRRQRRLR…TTKTAGPEQQ (85 aa)). The disordered stretch occupies residues 107–184 (RLRGASSAEA…TTKTAGPEQQ (78 aa)). A compositionally biased stretch (basic and acidic residues) spans 118-128 (DGDKDAPEPLD). A compositionally biased stretch (polar residues) spans 168-184 (LGSTELVTTKTAGPEQQ).

Highly expressed in spleen and lymph node, and in resting B-cells. Detected at lower levels in activated B-cells, resting CD4+ T-cells, in thymus and peripheral blood leukocytes.

The protein localises to the membrane. B-cell receptor specific for TNFSF13B/TALL1/BAFF/BLyS. Promotes the survival of mature B-cells and the B-cell response. The polypeptide is Tumor necrosis factor receptor superfamily member 13C (TNFRSF13C) (Homo sapiens (Human)).